A 125-amino-acid chain; its full sequence is Small ribosomal subunit protein uS13 (125 aa).

Positions 97–125 (PLRGQRTKTNARTRKGKRKTVANKKMASK) are disordered.

The protein belongs to the universal ribosomal protein uS13 family. As to quaternary structure, part of the 30S ribosomal subunit. Forms a loose heterodimer with protein S19. Forms two bridges to the 50S subunit in the 70S ribosome.

Located at the top of the head of the 30S subunit, it contacts several helices of the 16S rRNA. In the 70S ribosome it contacts the 23S rRNA (bridge B1a) and protein L5 of the 50S subunit (bridge B1b), connecting the 2 subunits; these bridges are implicated in subunit movement. Contacts the tRNAs in the A and P-sites. This Borrelia hermsii (strain HS1 / DAH) protein is Small ribosomal subunit protein uS13.